A 286-amino-acid polypeptide reads, in one-letter code: Gap junction alpha-6 protein (286 aa).

Topologically, residues M1 to K23 are cytoplasmic. The helical transmembrane segment at V24 to I41 threads the bilayer. Topologically, residues E42–R76 are extracellular. A helical membrane pass occupies residues L77–V99. Topologically, residues I100–R151 are cytoplasmic. Residues L152–Q174 traverse the membrane as a helical segment. At W175 to I209 the chain is on the extracellular side. The helical transmembrane segment at F210–V232 threads the bilayer. Residues L233–M286 lie on the Cytoplasmic side of the membrane.

This sequence belongs to the connexin family. Alpha-type (group II) subfamily. A connexon is composed of a hexamer of connexins. Expressed in testis.

The protein localises to the cell membrane. The protein resides in the cell junction. It localises to the gap junction. In terms of biological role, one gap junction consists of a cluster of closely packed pairs of transmembrane channels, the connexons, through which materials of low MW diffuse from one cell to a neighboring cell. This chain is Gap junction alpha-6 protein (Gja6), found in Rattus norvegicus (Rat).